The following is a 424-amino-acid chain: MSVTMADQQPEKTTAPASDVADSQPAVVSNTDTRKETTETAEPQSEDKTATTTAQPAVETTATQSGTAETPAEADKAPAEVQQPPQAEEEKPVAQQPEQPAYLAKNPALSQFFERLPAIVSSSGHAEMWGVPLKDSNDAPTVNVLIKFLRANEGNVKLAEEQLTKALKWRKETNPSALAESTSYSATKFGGLGYLTTYKEANGAETVVTWNIYGGVKDINTTFGDMNEFVKWRVALMELAVKELKMAEATSVIDYDGEDPYQMIQVHDYQNVSFLRLNPAIKAATKKTIEVFTTAYPELLREKFFVNVPAIMGWMFAAMKVFLSKNTTRKFHPISNGANLAREFPSLKDQFPKVYGGSAPALQEGARTVSLIQDESAPAATEQSKEQANKEEAAQEESKPESAPEQPKADPDVIVQEAPAADAK.

Composition is skewed to polar residues over residues 1–16 (MSVT…TTAP) and 50–68 (ATTT…SGTA). The interval 1–98 (MSVTMADQQP…EEKPVAQQPE (98 aa)) is disordered. The CRAL-TRIO domain maps to 188–363 (KFGGLGYLTT…VYGGSAPALQ (176 aa)). 5 residues coordinate heme: Tyr213, Arg233, His267, Tyr269, and Lys303. A disordered region spans residues 372-424 (IQDESAPAATEQSKEQANKEEAAQEESKPESAPEQPKADPDVIVQEAPAADAK). Basic and acidic residues predominate over residues 383–411 (QSKEQANKEEAAQEESKPESAPEQPKADP).

This sequence belongs to the SFH5 family. It depends on heme b as a cofactor.

Its subcellular location is the cytoplasm. It is found in the endoplasmic reticulum membrane. It localises to the microsome membrane. It carries out the reaction a 1,2-diacyl-sn-glycero-3-phospho-(1D-myo-inositol)(in) = a 1,2-diacyl-sn-glycero-3-phospho-(1D-myo-inositol)(out). In terms of biological role, non-classical phosphatidylinositol (PtdIns) transfer protein (PITP), which exhibits PtdIns-binding/transfer activity in the absence of detectable PtdCho-binding/transfer activity. Regulates PtdIns(4,5)P2 homeostasis at the plasma membrane. Heme-binding protein that may play a role in organic oxidant-induced stress responses. This Aspergillus fumigatus (strain ATCC MYA-4609 / CBS 101355 / FGSC A1100 / Af293) (Neosartorya fumigata) protein is Phosphatidylinositol transfer protein sfh5 (sfh5).